The sequence spans 333 residues: DNA-directed RNA polymerase subunit alpha (333 aa).

The alpha N-terminal domain (alpha-NTD) stretch occupies residues 1 to 251 (MEKLTKIKHR…AHFQTIGDLT (251 aa)). The interval 272-333 (DMEIRLLNLS…KLNEYGKLKN (62 aa)) is alpha C-terminal domain (alpha-CTD).

This sequence belongs to the RNA polymerase alpha chain family. In terms of assembly, homodimer. The RNAP catalytic core consists of 2 alpha, 1 beta, 1 beta' and 1 omega subunit. When a sigma factor is associated with the core the holoenzyme is formed, which can initiate transcription.

It carries out the reaction RNA(n) + a ribonucleoside 5'-triphosphate = RNA(n+1) + diphosphate. In terms of biological role, DNA-dependent RNA polymerase catalyzes the transcription of DNA into RNA using the four ribonucleoside triphosphates as substrates. This chain is DNA-directed RNA polymerase subunit alpha, found in Mycoplasmopsis synoviae (strain 53) (Mycoplasma synoviae).